The following is a 488-amino-acid chain: uncharacterized protein (488 aa).

The protein localises to the cytoplasm. The protein resides in the nucleus. This is an uncharacterized protein from Schizosaccharomyces pombe (strain 972 / ATCC 24843) (Fission yeast).